The following is a 158-amino-acid chain: Troponin C, isoform 1 (158 aa).

An N-acetylserine modification is found at serine 1. 4 consecutive EF-hand domains span residues 15 to 50 (EQIV…MGIK), 51 to 86 (VSST…FLIE), 91 to 126 (AMMK…LDAR), and 127 to 158 (LTAE…MMTG). The Ca(2+) site is built by aspartate 64, aspartate 66, serine 68, glutamine 70, and glutamate 75. The Ca(2+) site is built by aspartate 140, aspartate 142, serine 144, threonine 146, and glutamate 151.

Belongs to the troponin C family.

Functionally, troponin is the central regulatory protein of striated muscle contraction. Tn consists of three components: Tn-I which is the inhibitor of actomyosin ATPase, Tn-T which contains the binding site for tropomyosin and Tn-C. The binding of calcium to Tn-C abolishes the inhibitory action of Tn on actin filaments. In Balanus nubilus (Giant acorn barnacle), this protein is Troponin C, isoform 1.